We begin with the raw amino-acid sequence, 526 residues long: MVAKDYPFYLTVKRANCSLELPPASGPAKDAEEPSNKRVKPLSRVTSLANLIPPVKATPLKRFSQTLQRSISFRSESRPDILAPRPWSRNAAPSSTKRRDSKLWSETFDVCVNQMLTSKEIKRQEAIFELSQGEEDLIEDLKLAKKAYHDPMLKLSIMTEQELNQIFGTLDSLIPLHEELLSQLRDVRKPDGSTEHVGPILVGWLPCLSSYDSYCSNQVAAKALLDHKKQDHRVQDFLQRCLESPFSRKLDLWNFLDIPRSRLVKYPLLLREILRHTPNDNPDQQHLEEAINIIQGIVAEINTKTGESECRYYKERLLYLEEGQKDSLIDSSRVLCCHGELRNNRGVKLHVFLFQEVLVITRAVTHNEQLCYQLYRQPIPVKDLLLEDLQDGEVRLGGSLRGAFSNNERIKNFFRVSFKNGSQSQTHSLQANDTFNKQQWLNCIRQAKETVLCAAGQAGVLDSEGSFLNPTTGSRELQGETKLEQMDQSDSESDCSMDTSEVSLDCERMEQTDSSCGNSRHGESNV.

Residues 20-40 form a disordered region; the sequence is ELPPASGPAKDAEEPSNKRVK. 2 positions are modified to phosphoserine: S47 and S70. The DH domain maps to 122–304; that stretch reads KRQEAIFELS…QGIVAEINTK (183 aa). One can recognise a PH domain in the interval 291-449; sequence INIIQGIVAE…WLNCIRQAKE (159 aa). Residues 464-526 are disordered; the sequence is EGSFLNPTTG…GNSRHGESNV (63 aa). Polar residues predominate over residues 466 to 475; sequence SFLNPTTGSR.

In terms of assembly, interacts with RHOA and RHOB.

It is found in the cytoplasm. Functionally, acts as a guanine nucleotide exchange factor (GEF) for RhoA and RhoB GTPases. The chain is Rho guanine nucleotide exchange factor 3 (ARHGEF3) from Pongo abelii (Sumatran orangutan).